The sequence spans 1196 residues: DNA-directed RNA polymerase subunit beta (1196 aa).

This sequence belongs to the RNA polymerase beta chain family. The RNAP catalytic core consists of 2 alpha, 1 beta, 1 beta' and 1 omega subunit. When a sigma factor is associated with the core the holoenzyme is formed, which can initiate transcription.

It carries out the reaction RNA(n) + a ribonucleoside 5'-triphosphate = RNA(n+1) + diphosphate. Functionally, DNA-dependent RNA polymerase catalyzes the transcription of DNA into RNA using the four ribonucleoside triphosphates as substrates. This is DNA-directed RNA polymerase subunit beta from Lactococcus lactis subsp. lactis (strain IL1403) (Streptococcus lactis).